A 512-amino-acid chain; its full sequence is GMP synthase [glutamine-hydrolyzing] (512 aa).

Positions 7-197 constitute a Glutamine amidotransferase type-1 domain; the sequence is TIIVLDFGSQ…VFGVCGCSEG (191 aa). The active-site Nucleophile is C84. Active-site residues include H171 and E173. Residues 198–387 enclose the GMPS ATP-PPase domain; that stretch reads WNMENFIEVE…LGIPDEIVWR (190 aa). Residue 225–231 participates in ATP binding; sequence SGGVDSS.

In terms of assembly, homodimer.

The catalysed reaction is XMP + L-glutamine + ATP + H2O = GMP + L-glutamate + AMP + diphosphate + 2 H(+). Its pathway is purine metabolism; GMP biosynthesis; GMP from XMP (L-Gln route): step 1/1. Functionally, catalyzes the synthesis of GMP from XMP. In Bacillus cytotoxicus (strain DSM 22905 / CIP 110041 / 391-98 / NVH 391-98), this protein is GMP synthase [glutamine-hydrolyzing].